A 485-amino-acid polypeptide reads, in one-letter code: Trigger factor (485 aa).

In terms of domain architecture, PPIase FKBP-type spans 171-256 (GDRVVIDFVG…VKAVKAPGEA (86 aa)). Residues 443–485 (FADDEDEAAEAAAPASEAGASKGVISEGVISEGSAPSHETGAA) are disordered. Residues 452-462 (EAAAPASEAGA) show a composition bias toward low complexity.

Belongs to the FKBP-type PPIase family. Tig subfamily.

Its subcellular location is the cytoplasm. The enzyme catalyses [protein]-peptidylproline (omega=180) = [protein]-peptidylproline (omega=0). Functionally, involved in protein export. Acts as a chaperone by maintaining the newly synthesized protein in an open conformation. Functions as a peptidyl-prolyl cis-trans isomerase. The sequence is that of Trigger factor from Methylobacterium sp. (strain 4-46).